Consider the following 409-residue polypeptide: Imidazolonepropionase (409 aa).

Fe(3+) is bound by residues H70 and H72. 2 residues coordinate Zn(2+): H70 and H72. Residues R79, Y137, and H164 each coordinate 4-imidazolone-5-propanoate. Position 137 (Y137) interacts with N-formimidoyl-L-glutamate. H225 is a Fe(3+) binding site. H225 contacts Zn(2+). Residue Q228 coordinates 4-imidazolone-5-propanoate. Residues N314 and G316 each contribute to the N-formimidoyl-L-glutamate site. T317 is a binding site for 4-imidazolone-5-propanoate.

Belongs to the metallo-dependent hydrolases superfamily. HutI family. It depends on Zn(2+) as a cofactor. Requires Fe(3+) as cofactor.

The protein localises to the cytoplasm. The enzyme catalyses 4-imidazolone-5-propanoate + H2O = N-formimidoyl-L-glutamate. Its pathway is amino-acid degradation; L-histidine degradation into L-glutamate; N-formimidoyl-L-glutamate from L-histidine: step 3/3. In terms of biological role, catalyzes the hydrolytic cleavage of the carbon-nitrogen bond in imidazolone-5-propanoate to yield N-formimidoyl-L-glutamate. It is the third step in the universal histidine degradation pathway. The protein is Imidazolonepropionase of Paenarthrobacter aurescens (strain TC1).